The primary structure comprises 154 residues: Interleukin-2 (154 aa).

The signal sequence occupies residues 1 to 20 (MYRMQLLSCIALSLALVTNS). Thr23 carries O-linked (GalNAc...) threonine glycosylation. Cys78 and Cys126 form a disulfide bridge.

Belongs to the IL-2 family.

It localises to the secreted. Functionally, cytokine produced by activated CD4-positive helper T-cells and to a lesser extend activated CD8-positive T-cells and natural killer (NK) cells that plays pivotal roles in the immune response and tolerance. Binds to a receptor complex composed of either the high-affinity trimeric IL-2R (IL2RA/CD25, IL2RB/CD122 and IL2RG/CD132) or the low-affinity dimeric IL-2R (IL2RB and IL2RG). Interaction with the receptor leads to oligomerization and conformation changes in the IL-2R subunits resulting in downstream signaling starting with phosphorylation of JAK1 and JAK3. In turn, JAK1 and JAK3 phosphorylate the receptor to form a docking site leading to the phosphorylation of several substrates including STAT5. This process leads to activation of several pathways including STAT, phosphoinositide-3-kinase/PI3K and mitogen-activated protein kinase/MAPK pathways. Functions as a T-cell growth factor and can increase NK-cell cytolytic activity as well. Promotes strong proliferation of activated B-cells and subsequently immunoglobulin production. Plays a pivotal role in regulating the adaptive immune system by controlling the survival and proliferation of regulatory T-cells, which are required for the maintenance of immune tolerance. Moreover, participates in the differentiation and homeostasis of effector T-cell subsets, including Th1, Th2, Th17 as well as memory CD8-positive T-cells. This chain is Interleukin-2 (IL2), found in Papio anubis (Olive baboon).